The following is an 882-amino-acid chain: DNA mismatch repair protein MutS (882 aa).

Residue 635–642 (GPNMGGKS) participates in ATP binding.

Belongs to the DNA mismatch repair MutS family.

In terms of biological role, this protein is involved in the repair of mismatches in DNA. It is possible that it carries out the mismatch recognition step. This protein has a weak ATPase activity. This chain is DNA mismatch repair protein MutS, found in Janthinobacterium sp. (strain Marseille) (Minibacterium massiliensis).